An 865-amino-acid polypeptide reads, in one-letter code: General transcription factor 3C polypeptide 5 (865 aa).

Disordered regions lie at residues 1–21 (MNDE…NNNS), 111–163 (RPNK…NEKF), 191–215 (NNNT…TVPI), 391–522 (QDNH…NKEG), and 669–865 (DNKM…EESE). Composition is skewed to low complexity over residues 7-21 (KNNS…NNNS), 115-126 (QQTQTQTQTQTQ), 140-158 (QSPK…QQPQ), 199-210 (DNVNDSSSSSSS), and 401-411 (SKNNNNNNNNK). 2 stretches are compositionally biased toward basic and acidic residues: residues 412–439 (DSIK…KQEE) and 448–489 (NNEK…KGDD). 2 stretches are compositionally biased toward low complexity: residues 508 to 521 (EGNN…NNKE) and 677 to 696 (RSNT…PKST). Composition is skewed to basic and acidic residues over residues 697-713 (QPKE…EPRP), 757-766 (QNKEIDESLK), and 773-786 (MEKD…KNEE). 2 stretches are compositionally biased toward acidic residues: residues 800 to 820 (DYDD…DFDG) and 839 to 865 (EDSE…EESE).

This sequence belongs to the TFIIIC subunit 5 family. Part of the TFIIIC complex.

The protein localises to the nucleus. Involved in RNA polymerase III-mediated transcription. Integral, tightly associated component of the DNA-binding TFIIIC2 subcomplex that directly binds tRNA and virus-associated RNA promoters. This chain is General transcription factor 3C polypeptide 5 (gtf3c5), found in Dictyostelium discoideum (Social amoeba).